The following is a 261-amino-acid chain: Hemin import ATP-binding protein HmuV (261 aa).

Residues 2 to 243 (LCANNVSAQI…ALLKRVYNIN (242 aa)) form the ABC transporter domain. 34–41 (GPNGAGKS) is a binding site for ATP.

This sequence belongs to the ABC transporter superfamily. Heme (hemin) importer (TC 3.A.1.14.5) family. In terms of assembly, the complex is composed of two ATP-binding proteins (HmuV), two transmembrane proteins (HmuU) and a solute-binding protein (HmuT).

It localises to the cell inner membrane. Its function is as follows. Part of the ABC transporter complex HmuTUV involved in hemin import. Responsible for energy coupling to the transport system. The chain is Hemin import ATP-binding protein HmuV from Pseudoalteromonas translucida (strain TAC 125).